The following is a 435-amino-acid chain: Serine--tRNA ligase (435 aa).

Residue 240-242 (TAE) coordinates L-serine. 271–273 (RSE) is a binding site for ATP. Position 294 (Glu294) interacts with L-serine. Residue 358 to 361 (EISS) participates in ATP binding. Ser393 contributes to the L-serine binding site.

The protein belongs to the class-II aminoacyl-tRNA synthetase family. Type-1 seryl-tRNA synthetase subfamily. As to quaternary structure, homodimer. The tRNA molecule binds across the dimer.

It is found in the cytoplasm. The catalysed reaction is tRNA(Ser) + L-serine + ATP = L-seryl-tRNA(Ser) + AMP + diphosphate + H(+). It catalyses the reaction tRNA(Sec) + L-serine + ATP = L-seryl-tRNA(Sec) + AMP + diphosphate + H(+). Its pathway is aminoacyl-tRNA biosynthesis; selenocysteinyl-tRNA(Sec) biosynthesis; L-seryl-tRNA(Sec) from L-serine and tRNA(Sec): step 1/1. Catalyzes the attachment of serine to tRNA(Ser). Is also able to aminoacylate tRNA(Sec) with serine, to form the misacylated tRNA L-seryl-tRNA(Sec), which will be further converted into selenocysteinyl-tRNA(Sec). The sequence is that of Serine--tRNA ligase from Cupriavidus metallidurans (strain ATCC 43123 / DSM 2839 / NBRC 102507 / CH34) (Ralstonia metallidurans).